The primary structure comprises 237 residues: Pyridoxal phosphate homeostasis protein (237 aa).

N6-(pyridoxal phosphate)lysine is present on lysine 35.

Belongs to the pyridoxal phosphate-binding protein YggS/PROSC family.

Its function is as follows. Pyridoxal 5'-phosphate (PLP)-binding protein, which is involved in PLP homeostasis. This chain is Pyridoxal phosphate homeostasis protein, found in Haemophilus influenzae (strain ATCC 51907 / DSM 11121 / KW20 / Rd).